The primary structure comprises 314 residues: WD repeat domain-containing protein 83 (314 aa).

WD repeat units follow at residues 23 to 62 (CNQGAVRAVRFNVDGNYCMTCGSDKSLKLWNPHKGSLLKT), 65 to 104 (GHGYEVLDTAGSCDNSQLCSCSSDKTVILWDVAQGQVVRK), 107 to 146 (GHAGKVNCVQFNEEATVIISGSIDSSIRCWDCRSRRPDAI), 151 to 188 (EAKDGISSVKVSAHEILAGSVDGNLRRYDLRKGEMCAD), 189 to 228 (YLGSPITCVSFSQDSQCLLASSLDSTLRLLDKDTGELLGE), 231 to 272 (GHQN…LVLK), and 275 to 313 (VGKAVVQSLSFHPTECCLLTASEGGVQVWRGASYEEEGG).

It belongs to the WD repeat MORG1 family.

The protein localises to the cytoplasm. Its function is as follows. Molecular scaffold protein for various multimeric protein complexes. Acts as a module in the assembly of a multicomponent scaffold for the ERK pathway, linking ERK responses to specific agonists. Also involved in response to hypoxia by acting as a negative regulator of HIF1A/HIF-1-alpha. This chain is WD repeat domain-containing protein 83 (wdr83), found in Xenopus laevis (African clawed frog).